Consider the following 296-residue polypeptide: Large ribosomal subunit protein uL18A (296 aa).

A disordered region spans residues 251–296 (PVHEKKPKKEVKKKRWNRAKLSLEQKKDRVAQKKASFLRAQEKADS). A compositionally biased stretch (basic residues) spans 255 to 268 (KKPKKEVKKKRWNR). A compositionally biased stretch (basic and acidic residues) spans 271-281 (LSLEQKKDRVA).

Belongs to the universal ribosomal protein uL18 family. In terms of assembly, component of the large ribosomal subunit (LSU). Part of a LSU subcomplex, the 5S RNP which is composed of the 5S RNA, RPL5 and RPL11.

The protein localises to the cytoplasm. The protein resides in the nucleus. Its subcellular location is the nucleolus. In terms of biological role, component of the ribosome, a large ribonucleoprotein complex responsible for the synthesis of proteins in the cell. The small ribosomal subunit (SSU) binds messenger RNAs (mRNAs) and translates the encoded message by selecting cognate aminoacyl-transfer RNA (tRNA) molecules. The large subunit (LSU) contains the ribosomal catalytic site termed the peptidyl transferase center (PTC), which catalyzes the formation of peptide bonds, thereby polymerizing the amino acids delivered by tRNAs into a polypeptide chain. The nascent polypeptides leave the ribosome through a tunnel in the LSU and interact with protein factors that function in enzymatic processing, targeting, and the membrane insertion of nascent chains at the exit of the ribosomal tunnel. As part of the 5S RNP/5S ribonucleoprotein particle it is an essential component of the LSU, required for its formation and the maturation of rRNAs. It also couples ribosome biogenesis to p53/TP53 activation. As part of the 5S RNP it accumulates in the nucleoplasm and inhibits MDM2, when ribosome biogenesis is perturbed, mediating the stabilization and the activation of TP53. This chain is Large ribosomal subunit protein uL18A (rpl5-a), found in Xenopus laevis (African clawed frog).